The following is a 574-amino-acid chain: Septation ring formation regulator EzrA (574 aa).

Over M1–L7 the chain is Extracellular. A helical transmembrane segment spans residues L8–I26. Residues R27–F574 lie on the Cytoplasmic side of the membrane. Coiled-coil stretches lie at residues N102–N141, K255–L368, and L409–A495.

The protein belongs to the EzrA family.

It is found in the cell membrane. Its function is as follows. Negative regulator of FtsZ ring formation; modulates the frequency and position of FtsZ ring formation. Inhibits FtsZ ring formation at polar sites. Interacts either with FtsZ or with one of its binding partners to promote depolymerization. This chain is Septation ring formation regulator EzrA, found in Streptococcus mutans serotype c (strain ATCC 700610 / UA159).